A 153-amino-acid polypeptide reads, in one-letter code: Arginine repressor (153 aa).

It belongs to the ArgR family.

It localises to the cytoplasm. Its pathway is amino-acid biosynthesis; L-arginine biosynthesis [regulation]. Its function is as follows. Regulates arginine biosynthesis genes. This is Arginine repressor from Acetivibrio thermocellus (strain ATCC 27405 / DSM 1237 / JCM 9322 / NBRC 103400 / NCIMB 10682 / NRRL B-4536 / VPI 7372) (Clostridium thermocellum).